The sequence spans 898 residues: Pyruvate, phosphate dikinase (898 aa).

Residues M1–K355 are N-terminal. Residue R96 coordinates ATP. The linker 1 stretch occupies residues R356–S412. Residues P413 to I511 are central. Residue T466 is modified to Phosphothreonine; by PDRP1. The active-site Tele-phosphohistidine intermediate is the H468. Residues D512 to R546 form a linker 2 region. A C-terminal region spans residues M547 to S898. R574, R630, E758, G779, T780, N781, and D782 together coordinate substrate. Position 758 (E758) interacts with Mg(2+). Mg(2+) is bound at residue D782. C844 acts as the Proton donor in catalysis.

Belongs to the PEP-utilizing enzyme family. As to quaternary structure, homodimer. Mg(2+) is required as a cofactor. Post-translationally, phosphorylation of Thr-466 in the dark inactivates the enzyme. Dephosphorylation upon light stimulation reactivates the enzyme.

The enzyme catalyses pyruvate + phosphate + ATP = phosphoenolpyruvate + AMP + diphosphate + H(+). Activated by light-induced dephosphorylation. Inhibited by dark-induced phosphorylation. Both reactions are catalyzed by PDRP1. Catalyzes the reversible phosphorylation of pyruvate and phosphate. This is Pyruvate, phosphate dikinase (ppdK) from Rhizobium meliloti (strain 1021) (Ensifer meliloti).